The chain runs to 455 residues: Epoxide hydrolase 1 (455 aa).

A helical; Signal-anchor for type III membrane protein transmembrane segment spans residues 1–21 (MLLELLLASVLGFVIYWFVSG). Residues 22–455 (DKEESLPLED…CKFVGLVERQ (434 aa)) are Cytoplasmic-facing. D226 acts as the Nucleophile in catalysis. A Dimethylated arginine modification is found at R295. The active-site Proton donor is Y374. H431 (proton acceptor) is an active-site residue.

Belongs to the peptidase S33 family.

The protein resides in the microsome membrane. The protein localises to the endoplasmic reticulum membrane. The enzyme catalyses cis-stilbene oxide + H2O = (1R,2R)-hydrobenzoin. The catalysed reaction is 1-(4-methoxyphenyl)-N-methyl-N-[(3-methyloxetan-3-yl)methyl]methanamine + H2O = 2-{[(4-methoxybenzyl)(methyl)amino]methyl}-2-methylpropane-1,3-diol. It carries out the reaction 8,9-epoxy-(5Z,11Z,14Z)-eicosatrienoate + H2O = 8,9-dihydroxy-(5Z,11Z,14Z)-eicosatrienoate. It catalyses the reaction 11,12-epoxy-(5Z,8Z,14Z)-eicosatrienoate + H2O = 11,12-dihydroxy-(5Z,8Z,14Z)-eicosatrienoate. The enzyme catalyses 2-(5Z,8Z,11Z,14Z-eicosatetraenoyl)-glycerol + H2O = glycerol + (5Z,8Z,11Z,14Z)-eicosatetraenoate + H(+). With respect to regulation, inhibited by 10-hydroxystearamide and methoxy-arachidonyl fluorophosphate. In terms of biological role, biotransformation enzyme that catalyzes the hydrolysis of arene and aliphatic epoxides to less reactive and more water soluble dihydrodiols by the trans addition of water. May play a role in the metabolism of endogenous lipids such as epoxide-containing fatty acids. Metabolizes the abundant endocannabinoid 2-arachidonoylglycerol (2-AG) to free arachidonic acid (AA) and glycerol. Binds 20(S)-hydroxycholesterol (20(S)-OHC). In Oryctolagus cuniculus (Rabbit), this protein is Epoxide hydrolase 1 (EPHX1).